Here is a 1849-residue protein sequence, read N- to C-terminus: MDLSADHVEEVQNVLNAMQKILECPICLELIKEPVSTKCDHIFCKFCMLKLLNQKKGPSQCPLCKNDITKRSLQESTRFSQLVEELLKIIHAFELDTGLQFANSYNFSRKEDNSPEHLKEEVSIIQSMGYRNRAKRLWQSEPENPTLQETSLTVELSNLGIVRSLRTKQQTQSQNKSVYIELGSDSSEDTVNKASYFSVGDHELLEITPQGAKAKTNLNPAEKAACEFSEKDITNTEHHQLSIKDLITTQKHATETHPEKYQGISVSDFHVEPCGTDTHASSLQHENSSLLLTENRLNVEKAEFCNKSKQPVLVKSQQSRWAESKGTCKDRQIPSTEKKIVLNTDPLYRRKELRKQKPACPDSPGDSQDVPWVTLNNSIQKVNDWFSRSDEILTSDDSCDGGSESNNEVAGAVEIPNKVDGYSGSSEKINLMASDPHGTLIHERVHSKPVESNIEDKIFGKTYRRKSSLPNFSHIAEDLILGAFTVEPQITQEQPLTNKLKCKRRGTSGLQPEDFIKKVDLTIVPKTPEKMTEGTDQTEQKCHGMNITSDGHENKTKRDYVQKEQNANPAESLEKESVFRTEAEPISISISNMELELNIHRSKAPKNRLKRKSSTRKIPELELVVSRNPSLPNHTELPIDSSSSNEEMKKKHSSQMPVRQSQKLQLIGDKELTAGAKNNKTYEQINKRLASDAFPELKLTNTPGYFTNCSSKPEEFVHPSLQREENLGTIQVSNSTKDPKDLILREGKALQIERSVESTNISLVPDTDYSTQDSISLLEAKTPEKAKTAPNPCVSLCTATKNLKELIHRDFKDTKNNTEGFQDLLGHDINYVIQETSREMEDSELDTQYLQNTFKASKRQTFALFSNPGNPQKECATVFAHSGSLRDQSPRDPLKCRQKEDSQGKSESKSQHVQAICTTVHFPVADQQDRTPGDDAKCSAKEVTRVCQSSQLRGHKTELVFANKQGVSEKPNLIPSLSPIKSSVKTICKKSPSEKFEEPVTSPEKTLGSESIIQSAVSTISQNNIQESTFKEVSSNSVNEVGSSTNEVGSSVNEVGSSGENIQAEPGRNREPKLRALLGLGLTQPEVYKQSLPVSNCHHPEIKRQGENEDMPQAVKADFSPCLISDNLEQPTGSRHASQVCSETPDNLLNDDEIKENSHFAESDIKERSAVFSESVQKGEFRGSPGPFTHTHLAQGHQRGAGKLESEETVSSEDEELPCFQQLLFGKVTSTLSPSTGCNTVATEGLSKETEGNLESLKSGLNDCSGQVTSAKVSQEHHLNEEARCSGSLFSSQCSAMEDLTTNTNTQDPFLMFERPSKQVYQSESEEVLSDKELVSDDEERETGLEEDSCQEEQSVDSDLGEAVSDHVSETSLSEDGVGLSSQSDILTTQQRDTMQDNLLKLQQEMAELEAVLERHGSQPSHSSASLTADSRGPEHLLNLEQDTSERAILTSEKSRDYSRSQNPESLSADKFPVSLDSSTNKNKEPGMERSSASKFQLSYNRWYMHSSRSLQDRNCPSQKEPINVADMEEQQLAKREAQDLMGSFLPRQDQEGTPYLKSGISLFSHEPESDPSEDRAAEPAHVHSMPPSASALKLSQFRVEESTKNPAAAHIANTTRCNLREESMSKEKPEVISSTERSKKRLSMVASGLTPKELMLVQKFARKHHVTLTNLITEETTHVIMKTDPEFVCERTLKYFLGIAGGKWVVSYFWVTQSIKEGKMLDEHDFEVRGDVVNGRNHQGPKRARESRDKKIFKGLEICCYGPFTNMPTDQLEWMVQLCGASVVKEPSSFTPDQGTHPVVVVQPDAWTEDAGFHVIGQMCEAPVVTREWVLDSVALYQCQELDTYLVP.

Met1 carries the N-acetylmethionine modification. The RING-type zinc-finger motif lies at 24–65; it reads CPICLELIKEPVSTKCDHIFCKFCMLKLLNQKKGPSQCPLCK. A Phosphoserine modification is found at Ser114. Glycyl lysine isopeptide (Lys-Gly) (interchain with G-Cter in SUMO2) cross-links involve residues Lys301 and Lys339. Phosphoserine occurs at positions 395, 398, 423, and 434. Glycyl lysine isopeptide (Lys-Gly) (interchain with G-Cter in SUMO2) cross-links involve residues Lys457 and Lys517. The segment covering 530-542 has biased composition (basic and acidic residues); it reads KMTEGTDQTEQKC. Disordered regions lie at residues 530-558 and 620-662; these read KMTE…KTKR and ELEL…RQSQ. A phosphoserine mark is found at Ser691, Ser711, and Ser720. The segment at 882–912 is disordered; it reads SGSLRDQSPRDPLKCRQKEDSQGKSESKSQH. Over residues 888 to 910 the composition is skewed to basic and acidic residues; it reads QSPRDPLKCRQKEDSQGKSESKS. Lys981 is covalently cross-linked (Glycyl lysine isopeptide (Lys-Gly) (interchain with G-Cter in SUMO2)). Position 982 is a phosphoserine; by CHEK2 (Ser982). Ser1002 carries the phosphoserine modification. A compositionally biased stretch (low complexity) spans 1036–1061; the sequence is NSVNEVGSSTNEVGSSVNEVGSSGEN. The tract at residues 1036–1070 is disordered; the sequence is NSVNEVGSSTNEVGSSVNEVGSSGENIQAEPGRNR. Lys1073 is covalently cross-linked (Glycyl lysine isopeptide (Lys-Gly) (interchain with G-Cter in SUMO2)). 9 positions are modified to phosphoserine: Ser1138, Ser1184, Ser1211, Ser1212, Ser1274, Ser1323, Ser1330, Ser1336, and Ser1382. The segment at 1172-1211 is disordered; sequence FSESVQKGEFRGSPGPFTHTHLAQGHQRGAGKLESEETVS. Disordered stretches follow at residues 1321–1389, 1412–1433, and 1452–1493; these read YQSE…ILTT, VLER…DSRG, and SEKS…RSSA. The segment covering 1336–1360 has biased composition (acidic residues); it reads SDDEERETGLEEDSCQEEQSVDSDL. Composition is skewed to polar residues over residues 1370–1389 and 1418–1429; these read ETSL…ILTT and SQPSHSSASLTA. Phosphothreonine is present on Thr1389. The interaction with PALB2 stretch occupies residues 1392-1419; that stretch reads RDTMQDNLLKLQQEMAELEAVLERHGSQ. Phosphoserine is present on residues Ser1418, Ser1452, and Ser1518. 2 disordered regions span residues 1562 to 1590 and 1621 to 1640; these read SLFS…PPSA and REES…ERSK. Basic and acidic residues-rich tracts occupy residues 1566-1582 and 1621-1631; these read HEPE…EPAH and REESMSKEKPE. 2 consecutive BRCT domains span residues 1642–1729 and 1749–1848; these read RLSM…DFEV and RDKK…TYLV.

As to quaternary structure, heterodimer with BARD1. Part of the BRCA1-associated genome surveillance complex (BASC), which contains BRCA1, MSH2, MSH6, MLH1, ATM, BLM, PMS2 and the MRE11-RAD50-NBN protein (MRN) complex. This association could be a dynamic process changing throughout the cell cycle and within subnuclear domains. Component of the BRCA1-A complex, at least composed of BRCA1, BARD1, UIMC1/RAP80, ABRAXAS1, BRCC3/BRCC36, BABAM2 and BABAM1/NBA1. Interacts (via the BRCT domains) with ABRAXAS1 (phosphorylated form); this is important for recruitment to sites of DNA damage. Can form a heterotetramer with two molecules of ABRAXAS1 (phosphorylated form). Component of the BRCA1-RBBP8 complex. Interacts (via the BRCT domains) with RBBP8 ('Ser-327' phosphorylated form); the interaction ubiquitinates RBBP8, regulates CHEK1 activation, and involves RBBP8 in BRCA1-dependent G2/M checkpoint control on DNA damage. Associates with RNA polymerase II holoenzyme. Interacts with SMC1A, NELFB, DCLRE1C, CLSPN. CHEK1, CHEK2, BAP1, BRCC3, UBXN1 and PCLAF. Interacts (via BRCT domains) with BRIP1 (phosphorylated form). Interacts with FANCD2 (ubiquitinated form). Interacts with H2AX (phosphorylated on 'Ser-140'). Interacts (via the BRCT domains) with ACACA (phosphorylated form); the interaction prevents dephosphorylation of ACACA. Part of a BRCA complex containing BRCA1, BRCA2 and PALB2. Interacts directly with PALB2; the interaction is essential for its function in HRR. Interacts directly with BRCA2; the interaction occurs only in the presence of PALB2 which serves as the bridging protein. Interacts (via the BRCT domains) with LMO4; the interaction represses the transcriptional activity of BRCA1. Interacts (via the BRCT domains) with CCAR2 (via N-terminus); the interaction represses the transcriptional activator activity of BRCA1. Interacts with EXD2. Interacts (via C-terminus) with DHX9; this interaction is direct and links BRCA1 to the RNA polymerase II holoenzyme. Interacts with DNA helicase ZGRF1; the interaction is increased following DNA damage induction. Phosphorylated in response to IR, UV, and various stimuli that cause checkpoint activation, probably by ATM or ATR. Phosphorylation at Ser-982 by CHEK2 regulates mitotic spindle assembly. Phosphorylation by AURKA regulates centrosomal microtubule nucleation. Post-translationally, autoubiquitinated, undergoes 'Lys-6'-linked polyubiquitination. 'Lys-6'-linked polyubiquitination does not promote degradation.

Its subcellular location is the nucleus. It is found in the chromosome. The protein localises to the cytoplasm. The enzyme catalyses S-ubiquitinyl-[E2 ubiquitin-conjugating enzyme]-L-cysteine + [acceptor protein]-L-lysine = [E2 ubiquitin-conjugating enzyme]-L-cysteine + N(6)-ubiquitinyl-[acceptor protein]-L-lysine.. It functions in the pathway protein modification; protein ubiquitination. Functionally, E3 ubiquitin-protein ligase that specifically mediates the formation of 'Lys-6'-linked polyubiquitin chains and plays a central role in DNA repair by facilitating cellular responses to DNA damage. It is unclear whether it also mediates the formation of other types of polyubiquitin chains. The BRCA1-BARD1 heterodimer coordinates a diverse range of cellular pathways such as DNA damage repair, ubiquitination and transcriptional regulation to maintain genomic stability. Regulates centrosomal microtubule nucleation. Required for appropriate cell cycle arrests after ionizing irradiation in both the S-phase and the G2 phase of the cell cycle. Required for FANCD2 targeting to sites of DNA damage. Inhibits lipid synthesis by binding to inactive phosphorylated ACACA and preventing its dephosphorylation. Contributes to homologous recombination repair (HRR) via its direct interaction with PALB2, fine-tunes recombinational repair partly through its modulatory role in the PALB2-dependent loading of BRCA2-RAD51 repair machinery at DNA breaks. Component of the BRCA1-RBBP8 complex which regulates CHEK1 activation and controls cell cycle G2/M checkpoints on DNA damage via BRCA1-mediated ubiquitination of RBBP8. Acts as a transcriptional activator. This Bos taurus (Bovine) protein is Breast cancer type 1 susceptibility protein homolog (BRCA1).